We begin with the raw amino-acid sequence, 185 residues long: Monothiol glutaredoxin-S4, mitochondrial (185 aa).

The transit peptide at 1–36 (MARLMSSALIRGLVRSSCSPTVAAVAQPTIHQFRNY) directs the protein to the mitochondrion. The segment at 37–74 (SSGLGGDSTATGDSSSTRVAADPDTHQDFQPTTKSSNM) is disordered. Low complexity predominate over residues 43–53 (DSTATGDSSST). The span at 64–74 (DFQPTTKSSNM) shows a compositional bias: polar residues. The Glutaredoxin domain maps to 77–179 (DDIVSQDIKE…DVLGDIAQKR (103 aa)). Residue K94 participates in glutathione binding. C102 is a [2Fe-2S] cluster binding site. Glutathione is bound by residues K131, F143, and 156-157 (SD).

Belongs to the glutaredoxin family. CGFS subfamily.

Its subcellular location is the mitochondrion. In terms of biological role, may only reduce GSH-thiol disulfides, but not protein disulfides. This is Monothiol glutaredoxin-S4, mitochondrial (GRXS4) from Oryza sativa subsp. japonica (Rice).